The chain runs to 751 residues: MALTISISCFSSYFVSLLLLVLSSFSFVCFSLSTVSISHISNQTLVCALNNHSYLQCSSFPLNSIPFSLTGNLRNRRFSGVVSGNGFVCGLISRLDSNTSTLLCWRFSVDGTNMLHKRIYHGPELEELEAGNFRICGVERVSRRLRCWQPYYLPRPDNYRSIALGDNFFCGLSQPPGMISCEGIAKVPSGDHYIAIAAGSRQACAITVDNDVECWGQTQSLPREKFLALAVGEDRGCGVRWSNGTVVCWGNNNNFSLPQTLKDIHFTSIYAKGPMFCGVATRNYTLICWGNENFKSGVFTPFQGLISQVVMPGPCRRECPYRPLSGSQSLCGNELMICDLKRNDGEFPDTRAQNSKNKTWSRRNIAFLVVGCVGTFSLLLVISFLIFKSHCRCRVHDSGRLDDTRTIDIPKLEKRLCTLASLGNPGQLMEFSIDELALATDGFSVRFHLGIGSFGSVYQGVLSDGRHVAIKRAELTNPTLSGTTMRHRRADKDSAFVNELESMSRLNHKNLVRLLGFYEDTEERILVYEYMKNGSLADHLHNPQFDPLSWQTRLMIALDAARGIQYLHEFIVPPVIHRDIKSSNILLDATWTAKVSDFGLSQMGPTEEDDVSHLSLHAAGTLGYIDPEYYKFQQLTTKSDVYSFGVVLLELLSGHKAIHNNEDENPRNLVEYVVPYILLDEAHRILDQRIPPPTPYEIEAVAHVGYLAAECLMPCSRKRPSMVEVVSKLESALAACLTAPKTETVSRSNTY.

Residues 1–31 (MALTISISCFSSYFVSLLLLVLSSFSFVCFS) form the signal peptide. At 32-366 (LSTVSISHIS…NKTWSRRNIA (335 aa)) the chain is on the extracellular side. N-linked (GlcNAc...) asparagine glycosylation is found at Asn-42, Asn-51, Asn-98, Asn-243, Asn-254, Asn-283, and Asn-357. The helical transmembrane segment at 367-387 (FLVVGCVGTFSLLLVISFLIF) threads the bilayer. Residues 388-751 (KSHCRCRVHD…TETVSRSNTY (364 aa)) are Cytoplasmic-facing. Positions 443–733 (FSVRFHLGIG…EVVSKLESAL (291 aa)) constitute a Protein kinase domain. Residues 449–457 (LGIGSFGSV) and Lys-471 each bind ATP. The active-site Proton acceptor is Asp-579.

This sequence belongs to the protein kinase superfamily. Ser/Thr protein kinase family. In terms of assembly, homodimer. Expressed in roots, leaves, especially in trichomes, shoot apical meristems (SAM), and, to a lower extent, in floral buds.

It is found in the membrane. The catalysed reaction is L-seryl-[protein] + ATP = O-phospho-L-seryl-[protein] + ADP + H(+). It catalyses the reaction L-threonyl-[protein] + ATP = O-phospho-L-threonyl-[protein] + ADP + H(+). The protein is Serine/threonine-protein kinase-like protein CCR4 (CCR4) of Arabidopsis thaliana (Mouse-ear cress).